A 201-amino-acid chain; its full sequence is Peptide deformylase (201 aa).

Positions 92 and 134 each coordinate Fe cation. The active site involves E135. Fe cation is bound at residue H138.

The protein belongs to the polypeptide deformylase family. Fe(2+) is required as a cofactor.

The enzyme catalyses N-terminal N-formyl-L-methionyl-[peptide] + H2O = N-terminal L-methionyl-[peptide] + formate. Removes the formyl group from the N-terminal Met of newly synthesized proteins. Requires at least a dipeptide for an efficient rate of reaction. N-terminal L-methionine is a prerequisite for activity but the enzyme has broad specificity at other positions. This Rhodopirellula baltica (strain DSM 10527 / NCIMB 13988 / SH1) protein is Peptide deformylase.